The following is a 343-amino-acid chain: Methionine import ATP-binding protein MetN 1 (343 aa).

One can recognise an ABC transporter domain in the interval 2–241 (IKLSNITKVF…PKTPLAQKFI (240 aa)). ATP is bound at residue 38 to 45 (GASGAGKS).

The protein belongs to the ABC transporter superfamily. Methionine importer (TC 3.A.1.24) family. As to quaternary structure, the complex is composed of two ATP-binding proteins (MetN), two transmembrane proteins (MetI) and a solute-binding protein (MetQ).

It localises to the cell inner membrane. It catalyses the reaction L-methionine(out) + ATP + H2O = L-methionine(in) + ADP + phosphate + H(+). It carries out the reaction D-methionine(out) + ATP + H2O = D-methionine(in) + ADP + phosphate + H(+). Its function is as follows. Part of the ABC transporter complex MetNIQ involved in methionine import. Responsible for energy coupling to the transport system. The polypeptide is Methionine import ATP-binding protein MetN 1 (Salmonella choleraesuis (strain SC-B67)).